Consider the following 228-residue polypeptide: Cytochrome c biogenesis ATP-binding export protein CcmA (228 aa).

Residues 2–227 (LSIERLGVGR…LHLERSGAWL (226 aa)) enclose the ABC transporter domain. 34–41 (GANGSGKT) provides a ligand contact to ATP. Residues 106–126 (GAPDGTSSVPASGRSGVAAPP) are disordered.

The protein belongs to the ABC transporter superfamily. CcmA exporter (TC 3.A.1.107) family. The complex is composed of two ATP-binding proteins (CcmA) and two transmembrane proteins (CcmB).

It localises to the cell inner membrane. The catalysed reaction is heme b(in) + ATP + H2O = heme b(out) + ADP + phosphate + H(+). Functionally, part of the ABC transporter complex CcmAB involved in the biogenesis of c-type cytochromes; once thought to export heme, this seems not to be the case, but its exact role is uncertain. Responsible for energy coupling to the transport system. This chain is Cytochrome c biogenesis ATP-binding export protein CcmA, found in Paraburkholderia xenovorans (strain LB400).